A 235-amino-acid chain; its full sequence is NADH-quinone oxidoreductase subunit B 2 (235 aa).

Residues 1 to 14 (MGLTSRPTPASRQP) are compositionally biased toward low complexity. Residues 1-24 (MGLTSRPTPASRQPASPPPADPVL) form a disordered region. Residues Cys63, Cys64, Cys129, and Cys159 each contribute to the [4Fe-4S] cluster site. A disordered region spans residues 188–235 (TGATGGGPSTDALRSGLVAAPTAPGPTAPASTAPGPTAPAPTQDEERR).

Belongs to the complex I 20 kDa subunit family. In terms of assembly, NDH-1 is composed of 14 different subunits. Subunits NuoB, C, D, E, F, and G constitute the peripheral sector of the complex. The cofactor is [4Fe-4S] cluster.

The protein localises to the cell membrane. It catalyses the reaction a quinone + NADH + 5 H(+)(in) = a quinol + NAD(+) + 4 H(+)(out). In terms of biological role, NDH-1 shuttles electrons from NADH, via FMN and iron-sulfur (Fe-S) centers, to quinones in the respiratory chain. The immediate electron acceptor for the enzyme in this species is believed to be a menaquinone. Couples the redox reaction to proton translocation (for every two electrons transferred, four hydrogen ions are translocated across the cytoplasmic membrane), and thus conserves the redox energy in a proton gradient. The sequence is that of NADH-quinone oxidoreductase subunit B 2 from Streptomyces griseus subsp. griseus (strain JCM 4626 / CBS 651.72 / NBRC 13350 / KCC S-0626 / ISP 5235).